The following is a 362-amino-acid chain: Alternative oxidase, mitochondrial (362 aa).

Residues 1-64 constitute a mitochondrion transit peptide; it reads MNTPKVNILH…RNFSTTSVTR (64 aa). The chain crosses the membrane as a helical span at residues 156 to 176; sequence LVRFIFLESIAGVPGMVAGML. Residues glutamate 163, glutamate 202, and histidine 205 each coordinate Fe cation. Residues 222 to 242 form a helical membrane-spanning segment; it reads LILGAQGVFFNAMFLSYLISP. 3 residues coordinate Fe cation: glutamate 253, glutamate 310, and histidine 313.

This sequence belongs to the alternative oxidase family. As to quaternary structure, homodimer; disulfide-linked. Fe cation is required as a cofactor.

It localises to the mitochondrion inner membrane. Functionally, catalyzes cyanide-resistant oxygen consumption. May increase respiration when the cytochrome respiratory pathway is restricted, or in response to low temperatures. This chain is Alternative oxidase, mitochondrial (aod-1), found in Neurospora crassa (strain ATCC 24698 / 74-OR23-1A / CBS 708.71 / DSM 1257 / FGSC 987).